A 209-amino-acid chain; its full sequence is Glycerol-3-phosphate acyltransferase (209 aa).

Helical transmembrane passes span 4 to 24 (IAIG…AILI), 53 to 75 (LAAA…IGYG), 80 to 102 (PFWL…FFHF), 112 to 132 (LGAI…TWLL), and 138 to 158 (GYSS…VWWF).

It belongs to the PlsY family. In terms of assembly, probably interacts with PlsX.

Its subcellular location is the cell inner membrane. The catalysed reaction is an acyl phosphate + sn-glycerol 3-phosphate = a 1-acyl-sn-glycero-3-phosphate + phosphate. The protein operates within lipid metabolism; phospholipid metabolism. Its function is as follows. Catalyzes the transfer of an acyl group from acyl-phosphate (acyl-PO(4)) to glycerol-3-phosphate (G3P) to form lysophosphatidic acid (LPA). This enzyme utilizes acyl-phosphate as fatty acyl donor, but not acyl-CoA or acyl-ACP. This is Glycerol-3-phosphate acyltransferase from Sodalis glossinidius (strain morsitans).